A 342-amino-acid polypeptide reads, in one-letter code: Succinylglutamate desuccinylase (342 aa).

Zn(2+) contacts are provided by His-63, Glu-66, and His-155. Residue Glu-219 is part of the active site.

It belongs to the AspA/AstE family. Succinylglutamate desuccinylase subfamily. Requires Zn(2+) as cofactor.

It carries out the reaction N-succinyl-L-glutamate + H2O = L-glutamate + succinate. Its pathway is amino-acid degradation; L-arginine degradation via AST pathway; L-glutamate and succinate from L-arginine: step 5/5. Its function is as follows. Transforms N(2)-succinylglutamate into succinate and glutamate. The chain is Succinylglutamate desuccinylase from Vibrio vulnificus (strain YJ016).